The sequence spans 150 residues: Cytochrome c oxidase subunit 5A, mitochondrial (150 aa).

The N-terminal 41 residues, 1 to 41, are a transit peptide targeting the mitochondrion; the sequence is MLGAALRRCAVAATTRAGPRGLLHSARTPGPAAAIQSVRCY. An SIFI-degron motif is present at residues 2 to 17; sequence LGAALRRCAVAATTRA. 2 positions are modified to N6-acetyllysine: Lys87 and Lys113. The residue at position 141 (Thr141) is a Phosphothreonine.

It belongs to the cytochrome c oxidase subunit 5A family. As to quaternary structure, component of the cytochrome c oxidase (complex IV, CIV), a multisubunit enzyme composed of 14 subunits. The complex is composed of a catalytic core of 3 subunits MT-CO1, MT-CO2 and MT-CO3, encoded in the mitochondrial DNA, and 11 supernumerary subunits COX4I, COX5A, COX5B, COX6A, COX6B, COX6C, COX7A, COX7B, COX7C, COX8 and NDUFA4, which are encoded in the nuclear genome. The complex exists as a monomer or a dimer and forms supercomplexes (SCs) in the inner mitochondrial membrane with NADH-ubiquinone oxidoreductase (complex I, CI) and ubiquinol-cytochrome c oxidoreductase (cytochrome b-c1 complex, complex III, CIII), resulting in different assemblies (supercomplex SCI(1)III(2)IV(1) and megacomplex MCI(2)III(2)IV(2)). Interacts with AFG1L. Interacts with RAB5IF. In response to mitochondrial stress, the precursor protein is ubiquitinated by the SIFI complex in the cytoplasm before mitochondrial import, leading to its degradation. Within the SIFI complex, UBR4 initiates ubiquitin chain that are further elongated or branched by KCMF1.

The protein resides in the mitochondrion inner membrane. Its pathway is energy metabolism; oxidative phosphorylation. Functionally, component of the cytochrome c oxidase, the last enzyme in the mitochondrial electron transport chain which drives oxidative phosphorylation. The respiratory chain contains 3 multisubunit complexes succinate dehydrogenase (complex II, CII), ubiquinol-cytochrome c oxidoreductase (cytochrome b-c1 complex, complex III, CIII) and cytochrome c oxidase (complex IV, CIV), that cooperate to transfer electrons derived from NADH and succinate to molecular oxygen, creating an electrochemical gradient over the inner membrane that drives transmembrane transport and the ATP synthase. Cytochrome c oxidase is the component of the respiratory chain that catalyzes the reduction of oxygen to water. Electrons originating from reduced cytochrome c in the intermembrane space (IMS) are transferred via the dinuclear copper A center (CU(A)) of subunit 2 and heme A of subunit 1 to the active site in subunit 1, a binuclear center (BNC) formed by heme A3 and copper B (CU(B)). The BNC reduces molecular oxygen to 2 water molecules using 4 electrons from cytochrome c in the IMS and 4 protons from the mitochondrial matrix. This is Cytochrome c oxidase subunit 5A, mitochondrial (COX5A) from Pan troglodytes (Chimpanzee).